The following is a 626-amino-acid chain: tRNA uridine 5-carboxymethylaminomethyl modification enzyme MnmG (626 aa).

Position 13–18 (13–18 (GGGHAG)) interacts with FAD. An NAD(+)-binding site is contributed by 273-287 (GPRYCPSIEDKIHRF).

It belongs to the MnmG family. As to quaternary structure, homodimer. Heterotetramer of two MnmE and two MnmG subunits. FAD serves as cofactor.

It is found in the cytoplasm. NAD-binding protein involved in the addition of a carboxymethylaminomethyl (cmnm) group at the wobble position (U34) of certain tRNAs, forming tRNA-cmnm(5)s(2)U34. In Acinetobacter baumannii (strain ATCC 17978 / DSM 105126 / CIP 53.77 / LMG 1025 / NCDC KC755 / 5377), this protein is tRNA uridine 5-carboxymethylaminomethyl modification enzyme MnmG.